Here is a 322-residue protein sequence, read N- to C-terminus: Atrochrysone carboxyl ACP thioesterase dmxR1 (322 aa).

Zn(2+)-binding residues include H105, H107, D109, and H110. D109 functions as the Proton donor/acceptor in the catalytic mechanism.

This sequence belongs to the metallo-beta-lactamase superfamily. It depends on Zn(2+) as a cofactor.

The catalysed reaction is atrochrysone carboxyl-[ACP] + H2O = atrochrysone carboxylate + holo-[ACP] + H(+). It participates in secondary metabolite biosynthesis. Its function is as follows. Atrochrysone carboxyl ACP thioesterase; part of the gene cluster that mediates the biosynthesis of the dimeric xanthones cryptosporioptides. The pathway begins with the synthesis of atrochrysone thioester by the polyketide synthase dmx-nrPKS. The atrochrysone carboxyl ACP thioesterase dmxR1 then breaks the thioester bond and releases the atrochrysone carboxylic acid from dmx-nrPKS. Atrochrysone carboxylic acid is decarboxylated by the decarboxylase dmxR15, and oxidized by the anthrone oxygenase dmxR16 to yield emodin. Emodin is then reduced to emodin hydroquinone by the oxidoreductase dmxR7. A-ring reduction by the short chain dehydrogenase dmxR18, dehydration by the scytalone dehydratase-like protein dmxR17 and probable spontaneous re-oxidation, results in overall deoxygenation to chrysophanol. Baeyer-Villiger oxidation by the Baeyer-Villiger monooxygenase (BVMO) dmxR6 then yields monodictylactone in equilibrium with monodictyphenone. In the case of the cryptosporioptides biosynthesis, monodictylactone is reduced at C-12 to an alcohol (by the short chain dehydrogenases dmxR12 or dmxR8) and hydroxylated at C-5 by dmxR9, yielding the electron-rich aromatic which could eliminate H(2)O to form the ortho-quinonemethide, followed by tautomerisation to paraquinone and complete the formal reduction to produce the 10-methylgroup. Conjugate addition of C-4a-OH to the resulting paraquinone by the monooxygenase dmxR10 then gives cyclohexadienone, which is then reduced at C-5 by the short chain dehydrogenase dmxR3 to give the dihydroxanthone. The 6,7-epoxide in the cryptosporioptides could be introduced by the cytochrome P450 monooxygenase dmxL3. The highly reducing PKS dmxL2 manufactures butyrate, which is further carboxylated by dmxL1 to form ethylmalonate. It is not yet clear whether the carboxylation occurs while the butyrate is attached to the ACP of dmxL2, but this unusual fungal metabolite could then be esterified to O-5 by the O-acetyltransferase dmxR13. Finally, dimerization performed by dmxR5 gives the observed dimers cryptosporioptides A, B and C as the final products of the pathway. The polypeptide is Atrochrysone carboxyl ACP thioesterase dmxR1 (Cryptosporiopsis sp. (strain 8999)).